A 652-amino-acid chain; its full sequence is DNA ligase (652 aa).

NAD(+) is bound by residues 29-33 (DSEYD), 78-79 (SL), and Glu-107. Lys-109 (N6-AMP-lysine intermediate) is an active-site residue. Residues Arg-130, Glu-164, Lys-278, and Lys-302 each contribute to the NAD(+) site. Zn(2+) is bound by residues Cys-395, Cys-398, Cys-413, and Cys-418. The BRCT domain occupies 577 to 652 (DQQAALFGLT…IEDEDWLLNL (76 aa)).

Belongs to the NAD-dependent DNA ligase family. LigA subfamily. The cofactor is Mg(2+). Mn(2+) is required as a cofactor.

The catalysed reaction is NAD(+) + (deoxyribonucleotide)n-3'-hydroxyl + 5'-phospho-(deoxyribonucleotide)m = (deoxyribonucleotide)n+m + AMP + beta-nicotinamide D-nucleotide.. Functionally, DNA ligase that catalyzes the formation of phosphodiester linkages between 5'-phosphoryl and 3'-hydroxyl groups in double-stranded DNA using NAD as a coenzyme and as the energy source for the reaction. It is essential for DNA replication and repair of damaged DNA. The polypeptide is DNA ligase (Streptococcus equi subsp. equi (strain 4047)).